Here is a 662-residue protein sequence, read N- to C-terminus: DCC-interacting protein 13-beta (662 aa).

In terms of domain architecture, BAR spans 3–268 (AVDKLLLEEA…ESVYTPDIDV (266 aa)). A PH domain is found at 277-375 (LIQKTGYLNL…WICAINNISR (99 aa)). Residues 486–635 (SLLQQMFIVR…LMLSVPLTND (150 aa)) form the PID domain. A disordered region spans residues 643–662 (DQADDTGGSPSDHRGAESEA). Residues 653-662 (SDHRGAESEA) show a composition bias toward basic and acidic residues.

In terms of assembly, homodimer. Homotetramer. Binds RAB5A/Rab5 through an N-terminal domain. This interaction is essential for its recruitment to endosomal membranes as well as its role in cell proliferation. Binds subunits of the NuRD/MeCP1 complex. Interacts with FSHR; interaction is independent of follicle stimulating hormone stimulation. Interacts with APPL1; the interaction is decreased by adiponectin in a time-dependent manner. Forms a complex comprising APPL1, RUVBL2, CTNNB1, HDAC1 and HDAC2; interaction reduces interaction between CTNNB1, HDAC1, HDAC2 and RUVBL2 leading to the decrease of deacetylase activity of this complex; affects the recruitment of repressive complexes to the Wnt target genes. Interacts (via BAR domain) with TBC1D1; interaction is dependent of TBC1D1 phosphorylation at 'Ser-235'; interaction diminishes the phosphorylation of TBC1D1 at 'Thr-596', resulting in inhibition of SLC2A4 translocation and glucose uptake. Interacts with ANXA2; targets APPL2 to endosomes and acting in parallel to RAB5A. Interacts with RAB31 (in GTP-bound form); interaction contributes to or enhances recruitment of APPL2 to the phagosomes; interaction enhances Fc-gamma receptor-mediated phagocytosis through PI3K/Akt signaling in macrophages. Interacts with PIK3R1; forms a complex with PIK3R1 and APPL1. Interacts (via BAR domain) with ADIPOR1; hinders the accessibility of APPL1 to ADIPOR1; negatively regulates adiponectin signaling; ADIPOQ dissociates this interaction and facilitates the recruitment of APPL1 to ADIPOR1. Interacts (via BAR domain) with ADIPOR2; ADIPOQ dissociates this interaction.

Its subcellular location is the early endosome membrane. The protein localises to the nucleus. It localises to the cell membrane. It is found in the endosome membrane. The protein resides in the cytoplasm. Its subcellular location is the cytoplasmic vesicle. The protein localises to the phagosome. It localises to the cell projection. It is found in the ruffle. The protein resides in the ruffle membrane. Its subcellular location is the phagosome membrane. In terms of biological role, multifunctional adapter protein that binds to various membrane receptors, nuclear factors and signaling proteins to regulate many processes, such as cell proliferation, immune response, endosomal trafficking and cell metabolism. Regulates signaling pathway leading to cell proliferation through interaction with RAB5A and subunits of the NuRD/MeCP1 complex. Plays a role in immune response by modulating phagocytosis, inflammatory and innate immune responses. In macrophages, enhances Fc-gamma receptor-mediated phagocytosis through interaction with RAB31 leading to activation of PI3K/Akt signaling. In response to LPS, modulates inflammatory responses by playing a key role on the regulation of TLR4 signaling and in the nuclear translocation of RELA/NF-kappa-B p65 and the secretion of pro- and anti-inflammatory cytokines. Also functions as a negative regulator of innate immune response via inhibition of AKT1 signaling pathway by forming a complex with APPL1 and PIK3R1. Plays a role in endosomal trafficking of TGFBR1 from the endosomes to the nucleus. Plays a role in cell metabolism by regulating adiponecting ans insulin signaling pathways and adaptative thermogenesis. In muscle, negatively regulates adiponectin-simulated glucose uptake and fatty acid oyidation by inhibiting adiponectin signaling pathway through APPL1 sequestration thereby antagonizing APPL1 action. In muscles, negatively regulates insulin-induced plasma membrane recruitment of GLUT4 and glucose uptake through interaction with TBC1D1. Plays a role in cold and diet-induced adaptive thermogenesis by activating ventromedial hypothalamus (VMH) neurons throught AMPK inhibition which enhances sympathetic outflow to subcutaneous white adipose tissue (sWAT), sWAT beiging and cold tolerance. Also plays a role in other signaling pathways namely Wnt/beta-catenin, HGF and glucocorticoid receptor signaling. Positive regulator of beta-catenin/TCF-dependent transcription through direct interaction with RUVBL2/reptin resulting in the relief of RUVBL2-mediated repression of beta-catenin/TCF target genes by modulating the interactions within the beta-catenin-reptin-HDAC complex. May affect adult neurogenesis in hippocampus and olfactory system via regulating the sensitivity of glucocorticoid receptor. Required for fibroblast migration through HGF cell signaling. This is DCC-interacting protein 13-beta from Rattus norvegicus (Rat).